A 654-amino-acid chain; its full sequence is Translation factor GUF1, mitochondrial (654 aa).

The 181-residue stretch at 57–237 (ENYRNFSIVA…SVIKNIPSPV (181 aa)) folds into the tr-type G domain. Residues 66-73 (AHVDHGKS), 130-134 (DTPGH), and 184-187 (NKID) each bind GTP.

This sequence belongs to the TRAFAC class translation factor GTPase superfamily. Classic translation factor GTPase family. LepA subfamily.

The protein resides in the mitochondrion inner membrane. The enzyme catalyses GTP + H2O = GDP + phosphate + H(+). Its function is as follows. Promotes mitochondrial protein synthesis. May act as a fidelity factor of the translation reaction, by catalyzing a one-codon backward translocation of tRNAs on improperly translocated ribosomes. Binds to mitochondrial ribosomes in a GTP-dependent manner. This is Translation factor GUF1, mitochondrial from Candida albicans (strain SC5314 / ATCC MYA-2876) (Yeast).